Reading from the N-terminus, the 2531-residue chain is Highly reducing polyketide synthase gloL (2531 aa).

The Ketosynthase family 3 (KS3) domain maps to 15–435; the sequence is YEPLAIVGMG…GANAHVILDS (421 aa). Catalysis depends on for beta-ketoacyl synthase activity residues Cys-187, His-322, and His-358. A disordered region spans residues 449 to 525; it reads TNGLSVNGHS…GHSVNGHSKP (77 aa). Low complexity predominate over residues 453–503; that stretch reads SVNGHSINGNSVNGHSVNGHSTNGHSINGNSVNGHSVNGNSVNGHSTNGHS. Positions 505–521 are enriched in polar residues; that stretch reads NGHSANGNSINGHSVNG. Positions 602–909 are malonyl-CoA:ACP transacylase (MAT) domain; sequence MVFTGQGAQW…VTALERGKDC (308 aa). The interval 971–1099 is N-terminal hotdog fold; that stretch reads HEILGSRTVE…GQIRSGTDNP (129 aa). Residues 971-1251 are dehydratase (DH) domain; it reads HEILGSRTVE…GGQFSPIEED (281 aa). The PKS/mFAS DH domain occupies 971 to 1254; it reads HEILGSRTVE…FSPIEEDSSD (284 aa). His-1003 acts as the Proton acceptor; for dehydratase activity in catalysis. Residues 1109 to 1254 form a C-terminal hotdog fold region; sequence DHPRSVPSPY…FSPIEEDSSD (146 aa). The Proton donor; for dehydratase activity role is filled by Asp-1169. Residues 1419-1597 are methyltransferase (CMet) domain; it reads DFFTAAGHSK…FSGCDATVYD (179 aa). Residues 1806–2114 are enoyl reductase (ER) (ER) domain; it reads GLLQTLRWVP…KGSHIGKIVV (309 aa). Residues 2139-2312 form a ketoreductase (KR) domain region; that stretch reads GYLLVGGLGG…ASVVDIGVMG (174 aa). The Carrier domain maps to 2413–2505; the sequence is MSSVETDSSI…ALGLLTIEGL (93 aa). Ser-2464 carries the post-translational modification O-(pantetheine 4'-phosphoryl)serine.

The protein operates within mycotoxin biosynthesis. Highly reducing polyketide synthase; part of the gene cluster that mediates the biosynthesis of pneumocandins, lipohexapeptides of the echinocandin family that prevent fungal cell wall formation by non-competitive inhibition of beta-1,3-glucan synthase. The 10,12-dimethylmyristoyl side chain is synthesized by the reducing polyketide synthase gloL/GLPKS4. The thioesterase gloN/GLHYD exclusively interacts with gloL/GLPKS4 to maintain turnover of the polyketide side chain. The 10R,12S-dimethylmyristic acid is then transferred to the first thiolation domain of the nonribosomal peptide synthetase gloA/GLNRPS4 by the acyl-AMP ligase gloD/GLligase, followed by its acylation to L-ornithine to trigger elongation of the cyclic hexapeptide. L-ornithine, 4R-hydroxyl-L-proline (generated from L-proline by the dioxygenase gloF/GLOXY2), 3S-hydroxyl-L-homotyrosine (generated by gloG/GLHtyB, gloH/GLHtyA, gloI/GLHtyC, gloJ/GLHtyD and hydroxylated at C-3 by the dioxygenase gloM/GLOXY1), 3R-hydroxyl-L-glutamine (generated from L-glutamine probably by the dioxygenase gloE/GLOXY3) and 3S-hydroxyl-L-proline (generated from L-proline by the dioxygenase gloF/GLOXY2 to yield pneumocandin B0), or 3S-hydroxyl-4S-methyl-L-proline (generated from L-leucine by the dioxygenase gloC/GLOXY4 to yield pneumocandin A0) are sequentially added to the growing chain. The last C domain of gloA/GLNRPS4 is proposed to be responsible for cyclization by condensation to form the peptide bond between L-ornithine and 3S-hydroxyl-4S-methyl-L-proline (for pneumocandin A0) or 3S-hydroxyl-L-proline (for pneumocandin B0). Finally, the subsequent C-4 hydroxylation of 3S-hydroxyl-L-homotyrosine and L-ornithine dihydroxylation at C-4 and C-5 are performed by the cytochrome P450 monooxygenases gloP/GLP450-1 and gloO/GLP450-2, respectively. This is Highly reducing polyketide synthase gloL from Glarea lozoyensis (strain ATCC 20868 / MF5171).